A 215-amino-acid chain; its full sequence is Thiamine import ATP-binding protein ThiQ (215 aa).

The ABC transporter domain occupies 2-215 (IYLNNVILND…GQISQLQKGV (214 aa)). Position 32–39 (32–39 (GESGAGKS)) interacts with ATP.

It belongs to the ABC transporter superfamily. Thiamine importer (TC 3.A.1.19.1) family. The complex is composed of two ATP-binding proteins (ThiQ), two transmembrane proteins (ThiP) and a solute-binding protein (ThiB).

The protein localises to the cell inner membrane. It catalyses the reaction thiamine(out) + ATP + H2O = thiamine(in) + ADP + phosphate + H(+). Its function is as follows. Part of the ABC transporter complex ThiBPQ involved in thiamine import. Responsible for energy coupling to the transport system. This chain is Thiamine import ATP-binding protein ThiQ, found in Haemophilus influenzae (strain 86-028NP).